A 329-amino-acid chain; its full sequence is Holliday junction branch migration complex subunit RuvB (329 aa).

A large ATPase domain (RuvB-L) region spans residues 1 to 181; sequence MNELLHQHKA…FGIPLHLEFY (181 aa). Leu-20, Arg-21, Gly-62, Lys-65, Thr-66, Thr-67, Arg-171, Tyr-181, and Arg-218 together coordinate ATP. Thr-66 is a Mg(2+) binding site. Residues 182–252 form a small ATPAse domain (RuvB-S) region; sequence SVEELMLVIK…FADSALFNLG (71 aa). The interval 255–329 is head domain (RuvB-H); sequence KSGLDKMDIK…IEHLMNYKYI (75 aa). DNA is bound by residues Arg-308 and Arg-313.

This sequence belongs to the RuvB family. In terms of assembly, homohexamer. Forms an RuvA(8)-RuvB(12)-Holliday junction (HJ) complex. HJ DNA is sandwiched between 2 RuvA tetramers; dsDNA enters through RuvA and exits via RuvB. An RuvB hexamer assembles on each DNA strand where it exits the tetramer. Each RuvB hexamer is contacted by two RuvA subunits (via domain III) on 2 adjacent RuvB subunits; this complex drives branch migration. In the full resolvosome a probable DNA-RuvA(4)-RuvB(12)-RuvC(2) complex forms which resolves the HJ.

It is found in the cytoplasm. The catalysed reaction is ATP + H2O = ADP + phosphate + H(+). Functionally, the RuvA-RuvB-RuvC complex processes Holliday junction (HJ) DNA during genetic recombination and DNA repair, while the RuvA-RuvB complex plays an important role in the rescue of blocked DNA replication forks via replication fork reversal (RFR). RuvA specifically binds to HJ cruciform DNA, conferring on it an open structure. The RuvB hexamer acts as an ATP-dependent pump, pulling dsDNA into and through the RuvAB complex. RuvB forms 2 homohexamers on either side of HJ DNA bound by 1 or 2 RuvA tetramers; 4 subunits per hexamer contact DNA at a time. Coordinated motions by a converter formed by DNA-disengaged RuvB subunits stimulates ATP hydrolysis and nucleotide exchange. Immobilization of the converter enables RuvB to convert the ATP-contained energy into a lever motion, pulling 2 nucleotides of DNA out of the RuvA tetramer per ATP hydrolyzed, thus driving DNA branch migration. The RuvB motors rotate together with the DNA substrate, which together with the progressing nucleotide cycle form the mechanistic basis for DNA recombination by continuous HJ branch migration. Branch migration allows RuvC to scan DNA until it finds its consensus sequence, where it cleaves and resolves cruciform DNA. The sequence is that of Holliday junction branch migration complex subunit RuvB from Anaplasma phagocytophilum (strain HZ).